The primary structure comprises 349 residues: NADH-ubiquinone oxidoreductase chain 2 (349 aa).

The next 9 helical transmembrane spans lie at 3–23, 66–86, 98–118, 139–159, 178–198, 199–219, 240–260, 274–294, and 319–339; these read PYVL…TFAS, AAAM…EWEI, VMLA…LPEV, FALM…TIGL, ILAY…QFAP, SLTL…FLTL, LAAL…LSGF, GLPL…YFYL, and FTMI…LLPL.

The protein belongs to the complex I subunit 2 family.

It localises to the mitochondrion inner membrane. The catalysed reaction is a ubiquinone + NADH + 5 H(+)(in) = a ubiquinol + NAD(+) + 4 H(+)(out). Its function is as follows. Core subunit of the mitochondrial membrane respiratory chain NADH dehydrogenase (Complex I) that is believed to belong to the minimal assembly required for catalysis. Complex I functions in the transfer of electrons from NADH to the respiratory chain. The immediate electron acceptor for the enzyme is believed to be ubiquinone. This Oncorhynchus mykiss (Rainbow trout) protein is NADH-ubiquinone oxidoreductase chain 2 (MT-ND2).